The chain runs to 150 residues: Ribonuclease H (150 aa).

The 141-residue stretch at 1 to 141 (MRPVIIHTDG…ADQLARDGLT (141 aa)) folds into the RNase H type-1 domain. Residues Asp9, Glu47, Asp69, and Asp133 each coordinate Mg(2+).

Belongs to the RNase H family. As to quaternary structure, monomer. It depends on Mg(2+) as a cofactor.

Its subcellular location is the cytoplasm. It carries out the reaction Endonucleolytic cleavage to 5'-phosphomonoester.. Endonuclease that specifically degrades the RNA of RNA-DNA hybrids. The chain is Ribonuclease H from Rhodopseudomonas palustris (strain BisB5).